We begin with the raw amino-acid sequence, 100 residues long: NADH-quinone oxidoreductase subunit K (100 aa).

Helical transmembrane passes span 4–24 (LSHG…GMII), 28–48 (LLFM…AFVV), and 60–80 (VMYI…LALL).

The protein belongs to the complex I subunit 4L family. NDH-1 is composed of 13 different subunits. Subunits NuoA, H, J, K, L, M, N constitute the membrane sector of the complex.

The protein resides in the cell inner membrane. It carries out the reaction a quinone + NADH + 5 H(+)(in) = a quinol + NAD(+) + 4 H(+)(out). Functionally, NDH-1 shuttles electrons from NADH, via FMN and iron-sulfur (Fe-S) centers, to quinones in the respiratory chain. The immediate electron acceptor for the enzyme in this species is believed to be ubiquinone. Couples the redox reaction to proton translocation (for every two electrons transferred, four hydrogen ions are translocated across the cytoplasmic membrane), and thus conserves the redox energy in a proton gradient. The chain is NADH-quinone oxidoreductase subunit K from Sodalis glossinidius (strain morsitans).